A 57-amino-acid chain; its full sequence is UPF0391 membrane protein HNE_2348 (57 aa).

The next 2 helical transmembrane spans lie at 4–24 (WALT…GGIA) and 27–47 (AASI…ITFV).

This sequence belongs to the UPF0391 family.

Its subcellular location is the cell membrane. In Hyphomonas neptunium (strain ATCC 15444), this protein is UPF0391 membrane protein HNE_2348.